Reading from the N-terminus, the 266-residue chain is Putative carbamate hydrolase RutD (266 aa).

This sequence belongs to the AB hydrolase superfamily. Hydrolase RutD family.

It carries out the reaction carbamate + 2 H(+) = NH4(+) + CO2. Its function is as follows. Involved in pyrimidine catabolism. May facilitate the hydrolysis of carbamate, a reaction that can also occur spontaneously. This Escherichia coli O103:H2 (strain 12009 / EHEC) protein is Putative carbamate hydrolase RutD.